Here is a 100-residue protein sequence, read N- to C-terminus: uncharacterized protein (100 aa).

Its subcellular location is the mitochondrion. This is an uncharacterized protein from Arabidopsis thaliana (Mouse-ear cress).